The chain runs to 238 residues: Large ribosomal subunit protein uL2 (238 aa).

Positions 200–238 (HGGGLHQSVSRPSTVSRNAPPGRKVGHIAARRTGRKEGK) are disordered. Positions 206-216 (QSVSRPSTVSR) are enriched in polar residues. The segment covering 223 to 238 (KVGHIAARRTGRKEGK) has biased composition (basic residues).

This sequence belongs to the universal ribosomal protein uL2 family. In terms of assembly, part of the 50S ribosomal subunit. Forms a bridge to the 30S subunit in the 70S ribosome.

One of the primary rRNA binding proteins. Required for association of the 30S and 50S subunits to form the 70S ribosome, for tRNA binding and peptide bond formation. It has been suggested to have peptidyltransferase activity; this is somewhat controversial. Makes several contacts with the 16S rRNA in the 70S ribosome. The protein is Large ribosomal subunit protein uL2 of Saccharolobus islandicus (strain L.S.2.15 / Lassen #1) (Sulfolobus islandicus).